The sequence spans 328 residues: Glycerol-3-phosphate dehydrogenase [NAD(P)+] (328 aa).

Positions 15, 35, 51, and 107 each coordinate NADPH. The sn-glycerol 3-phosphate site is built by K107, G135, and S137. An NADPH-binding site is contributed by A139. Sn-glycerol 3-phosphate-binding residues include K190, D243, S253, R254, and N255. K190 acts as the Proton acceptor in catalysis. Position 254 (R254) interacts with NADPH. NADPH-binding residues include L276 and E278.

Belongs to the NAD-dependent glycerol-3-phosphate dehydrogenase family.

It is found in the cytoplasm. The catalysed reaction is sn-glycerol 3-phosphate + NAD(+) = dihydroxyacetone phosphate + NADH + H(+). It catalyses the reaction sn-glycerol 3-phosphate + NADP(+) = dihydroxyacetone phosphate + NADPH + H(+). The protein operates within membrane lipid metabolism; glycerophospholipid metabolism. Catalyzes the reduction of the glycolytic intermediate dihydroxyacetone phosphate (DHAP) to sn-glycerol 3-phosphate (G3P), the key precursor for phospholipid synthesis. The polypeptide is Glycerol-3-phosphate dehydrogenase [NAD(P)+] (Rhodopseudomonas palustris (strain BisA53)).